A 511-amino-acid chain; its full sequence is Centrosomal protein CCDC61 (511 aa).

The tract at residues 1 to 144 (MEVGTVVQEE…PLPLPYLGKP (144 aa)) is head domain. Positions 147–272 (AELQKEIRAL…RVKSLTTELA (126 aa)) form a coiled coil. Disordered stretches follow at residues 306-403 (TRVG…SREP) and 447-486 (RGRKLMSNGPAVSRGRHINKKPMCSTPAQRMRAGDTSMDT). Positions 315–335 (GSRERIEDRGRRSEERVRRAD) are enriched in basic and acidic residues. Polar residues predominate over residues 338 to 352 (GSRNCITRPSPSPTG). Positions 366 to 378 (DRQRRQKEAELKS) are enriched in basic and acidic residues.

Belongs to the CCDC61 family. In terms of assembly, forms homodimers (via head domain).

The protein resides in the cytoplasm. The protein localises to the cytoskeleton. Its subcellular location is the microtubule organizing center. It is found in the centrosome. It localises to the centriolar satellite. The protein resides in the cilium basal body. Functionally, microtubule-binding centrosomal protein required for centriole cohesion, independently of the centrosome-associated protein/CEP250 and rootletin/CROCC linker. In interphase, required for anchoring microtubule at the mother centriole subdistal appendages and for centrosome positioning. During mitosis, may be involved in spindle assembly and chromatin alignment by regulating the organization of spindle microtubules into a symmetrical structure. Plays a non-essential role in ciliogenesis. This Danio rerio (Zebrafish) protein is Centrosomal protein CCDC61.